A 221-amino-acid chain; its full sequence is Coiled-coil domain-containing protein 70 (221 aa).

Residues 129–168 (NALWEKDRNLLQEDKALWEEEKALWVEERALLEEEKALWE) adopt a coiled-coil conformation.

The sequence is that of Coiled-coil domain-containing protein 70 (CCDC70) from Macaca fascicularis (Crab-eating macaque).